The sequence spans 394 residues: ORC1-type DNA replication protein 3 (394 aa).

ATP-binding positions include 66–70 (TGKTF) and Tyr-207.

Belongs to the CDC6/cdc18 family. Monomer. Interacts with Cdc6-1, Cdc6-2, MCM and PolB1.

Its function is as follows. Involved in regulation of DNA replication. May play essential roles in origin recognition and cell cycle control of replication. Binds to DNA, with a preference for molecules that contain a bubble, a fork, or a tail. Inhibits the binding of the MCM helicase to the origin DNA and inhibits its DNA helicase activity. Also regulates the DNA polymerase and the nuclease activities of PolB1. Inhibits the DNA-binding activity of Cdc6-1 and Cdc6-2. This is ORC1-type DNA replication protein 3 (cdc6-3) from Saccharolobus solfataricus (strain ATCC 35092 / DSM 1617 / JCM 11322 / P2) (Sulfolobus solfataricus).